The sequence spans 173 residues: dCTP deaminase (173 aa).

DCTP contacts are provided by residues 97 to 102 and D113; that span reads RSSFAR. E123 functions as the Proton donor/acceptor in the catalytic mechanism. DCTP is bound by residues Y155 and Q162.

This sequence belongs to the dCTP deaminase family. As to quaternary structure, homotrimer.

The enzyme catalyses dCTP + H2O + H(+) = dUTP + NH4(+). It functions in the pathway pyrimidine metabolism; dUMP biosynthesis; dUMP from dCTP (dUTP route): step 1/2. In terms of biological role, catalyzes the deamination of dCTP to dUTP. The protein is dCTP deaminase of Acidianus ambivalens (Desulfurolobus ambivalens).